A 288-amino-acid chain; its full sequence is Polyamine aminopropyltransferase (288 aa).

A PABS domain is found at 9–242 (SGWLDEYHQG…GLWSWAFASM (234 aa)). S-methyl-5'-thioadenosine is bound at residue Gln-36. Spermidine is bound by residues His-67 and Asp-91. Residues Glu-111 and 143–144 (NG) each bind S-methyl-5'-thioadenosine. The active-site Proton acceptor is the Asp-162. Position 169 (Pro-169) interacts with S-methyl-5'-thioadenosine.

Belongs to the spermidine/spermine synthase family. Homodimer or homotetramer.

It localises to the cytoplasm. It catalyses the reaction S-adenosyl 3-(methylsulfanyl)propylamine + putrescine = S-methyl-5'-thioadenosine + spermidine + H(+). Its pathway is amine and polyamine biosynthesis; spermidine biosynthesis; spermidine from putrescine: step 1/1. In terms of biological role, catalyzes the irreversible transfer of a propylamine group from the amino donor S-adenosylmethioninamine (decarboxy-AdoMet) to putrescine (1,4-diaminobutane) to yield spermidine. This Prochlorococcus marinus (strain NATL1A) protein is Polyamine aminopropyltransferase.